Reading from the N-terminus, the 1049-residue chain is Cilia- and flagella-associated protein 337 (1049 aa).

Residues 81 to 116 enclose the EF-hand domain; sequence GTKEEYGELFDKVDVAQDGFINWDKLTSFILLELYE. WD repeat units lie at residues 138-177, 358-397, 401-440, 487-528, 531-570, and 633-671; these read KHKD…QETF, NIAQ…KPVG, GHSA…SIQR, SHEK…KQFT, HGNA…HHTL, and QHHD…AHHV. Residues 691–712 form a disordered region; it reads LLSAGRSQPSHPMADHSTTGVR. Polar residues predominate over residues 695–711; it reads GRSQPSHPMADHSTTGV. WD repeat units lie at residues 719 to 766, 769 to 809, and 825 to 866; these read EGKN…LLAE, AHSG…LNSS, and PHED…VWIF.

This sequence belongs to the CFAP337 family. As to quaternary structure, associates with components of the nexin-dynein regulatory complex (N-DRC) and the CFAP184:CFAP263 complex.

It is found in the cell projection. Its subcellular location is the cilium. Associates with components of the nexin-dynein regulatory complex (N-DRC), a key regulator of ciliary/flagellar motility, and might act as an inner dynein arm (IDA) hub or linkage. This is Cilia- and flagella-associated protein 337 from Homo sapiens (Human).